We begin with the raw amino-acid sequence, 297 residues long: Probable endonuclease 4 (297 aa).

9 residues coordinate Zn(2+): histidine 68, histidine 109, glutamate 144, aspartate 178, histidine 181, histidine 213, aspartate 226, histidine 228, and glutamate 258.

Belongs to the AP endonuclease 2 family. Zn(2+) is required as a cofactor.

The catalysed reaction is Endonucleolytic cleavage to 5'-phosphooligonucleotide end-products.. Its function is as follows. Endonuclease IV plays a role in DNA repair. It cleaves phosphodiester bonds at apurinic or apyrimidinic (AP) sites, generating a 3'-hydroxyl group and a 5'-terminal sugar phosphate. The protein is Probable endonuclease 4 of Lysinibacillus sphaericus (strain C3-41).